Here is a 267-residue protein sequence, read N- to C-terminus: Centromere protein Q (267 aa).

Basic residues-rich tracts occupy residues 1-22 and 39-49; these read MSGKARASRKKPQQVKRSLKQR and KRNRSHAKHLS. Residues 1–54 are disordered; the sequence is MSGKARASRKKPQQVKRSLKQRANKEADLPENEVGNTAKRNRSHAKHLSSKVTG. Phosphoserine is present on S49. The stretch at 100–202 forms a coiled coil; the sequence is IKRKEEIQCH…EEQEVKQVFH (103 aa).

This sequence belongs to the CENP-Q/OKP1 family. Component of the CENPA-CAD complex, composed of CENPI, CENPK, CENPL, CENPO, CENPP, CENPQ, CENPR and CENPS. The CENPA-CAD complex interacts with the CENPA-NAC complex, at least composed of CENPA, CENPC, CENPH, CENPM, CENPN, CENPT and CENPU. In terms of processing, phosphorylation at Ser-49 is essential for CENPE recruitment to kinetochores and orderly chromosome congression.

Its subcellular location is the nucleus. The protein resides in the chromosome. It localises to the centromere. Component of the CENPA-CAD (nucleosome distal) complex, a complex recruited to centromeres which is involved in assembly of kinetochore proteins, mitotic progression and chromosome segregation. May be involved in incorporation of newly synthesized CENPA into centromeres via its interaction with the CENPA-NAC complex. Plays an important role in chromosome congression and in the recruitment of CENP-O complex (which comprises CENPO, CENPP, CENPQ and CENPU), CENPE and PLK1 to the kinetochores. The protein is Centromere protein Q (Cenpq) of Mus musculus (Mouse).